A 387-amino-acid chain; its full sequence is Sialic acid-binding Ig-like lectin 13 (387 aa).

The N-terminal stretch at 1–15 is a signal peptide; that stretch reads MLPLLLPLLWAGALA. The Ig-like V-type domain maps to 16 to 138; it reads LEGIFQLEVP…KDPPLSVHVT (123 aa). Residues 16–341 are Extracellular-facing; it reads LEGIFQLEVP…QRKSGPMAEV (326 aa). 3 cysteine pairs are disulfide-bonded: cysteine 35-cysteine 168, cysteine 40-cysteine 100, and cysteine 162-cysteine 211. Asparagine 99 is a glycosylation site (N-linked (GlcNAc...) asparagine). Arginine 118 lines the N-acetylneuraminate pocket. Residues 144-227 enclose the Ig-like C2-type 1 domain; that stretch reads PDILIPGALK…AGVTTTRTVR (84 aa). N-linked (GlcNAc...) asparagine glycans are attached at residues asparagine 229, asparagine 236, and asparagine 254. Residues 234–326 enclose the Ig-like C2-type 2 domain; it reads PQNLTLTVFQ…RNPLGSQQVS (93 aa). The cysteines at positions 270 and 314 are disulfide-linked. The helical transmembrane segment at 342 to 362 threads the bilayer; it reads VLVAIGEAAVKILLLFLCLII. Residues 363–387 lie on the Cytoplasmic side of the membrane; that stretch reads LRVKSHRRKAAKAATGVEAAKVVKG.

This sequence belongs to the immunoglobulin superfamily. SIGLEC (sialic acid binding Ig-like lectin) family.

Its subcellular location is the membrane. In terms of biological role, putative adhesion molecule that mediates sialic-acid dependent binding to cells. In Pan troglodytes (Chimpanzee), this protein is Sialic acid-binding Ig-like lectin 13 (SIGLEC13).